The sequence spans 283 residues: 4-diphosphocytidyl-2-C-methyl-D-erythritol kinase (283 aa).

Lys-12 is an active-site residue. Position 94 to 104 (94 to 104) interacts with ATP; that stretch reads PAQAGLGGGSS. Asp-136 is a catalytic residue.

The protein belongs to the GHMP kinase family. IspE subfamily.

The enzyme catalyses 4-CDP-2-C-methyl-D-erythritol + ATP = 4-CDP-2-C-methyl-D-erythritol 2-phosphate + ADP + H(+). The protein operates within isoprenoid biosynthesis; isopentenyl diphosphate biosynthesis via DXP pathway; isopentenyl diphosphate from 1-deoxy-D-xylulose 5-phosphate: step 3/6. Its function is as follows. Catalyzes the phosphorylation of the position 2 hydroxy group of 4-diphosphocytidyl-2C-methyl-D-erythritol. The sequence is that of 4-diphosphocytidyl-2-C-methyl-D-erythritol kinase from Acidovorax sp. (strain JS42).